Here is a 667-residue protein sequence, read N- to C-terminus: Probable oxidoreductase YyaE (667 aa).

The region spanning 2–59 (SKVHQSACPLNCWDSCGFLVTVDDGKVTKVDGDPNHPITEGKICGRGRMLETKTNSPD) is the 4Fe-4S Mo/W bis-MGD-type domain. Residues cysteine 9, cysteine 13, cysteine 17, and cysteine 45 each contribute to the [4Fe-4S] cluster site.

The protein belongs to the prokaryotic molybdopterin-containing oxidoreductase family. Requires Mo-bis(molybdopterin guanine dinucleotide) as cofactor.

The chain is Probable oxidoreductase YyaE (yyaE) from Bacillus subtilis (strain 168).